A 108-amino-acid polypeptide reads, in one-letter code: MKFKKNDEVIVIAGKDKGTVGRIEKILVKENKVIIKDVNMVTKHNKPSQQNQEGNLTSVEAPIHVSNVAYLVKKASKSSAAVYSKLGRVTNKDGKKVRLVKKTKKEIQ.

It belongs to the universal ribosomal protein uL24 family. In terms of assembly, part of the 50S ribosomal subunit.

Its function is as follows. One of two assembly initiator proteins, it binds directly to the 5'-end of the 23S rRNA, where it nucleates assembly of the 50S subunit. In terms of biological role, one of the proteins that surrounds the polypeptide exit tunnel on the outside of the subunit. The protein is Large ribosomal subunit protein uL24 of Mycoplasmopsis synoviae (strain 53) (Mycoplasma synoviae).